An 837-amino-acid chain; its full sequence is Zinc fingers and homeoboxes protein 2 (837 aa).

The interval 1–41 (MASKRKSTTPCMVRTSQVVEQDVPEEVDRAKEKGIGTPQPD) is disordered. Positions 27 to 77 (VDRAKEKGIGTPQPDVAKDCWAAELENSSKENEVIEVKSMGESQSKKLQGG) are interaction with EFNB1. Position 37 is a phosphothreonine (Thr37). Lys64 is covalently cross-linked (Glycyl lysine isopeptide (Lys-Gly) (interchain with G-Cter in SUMO2)). C2H2-type zinc fingers lie at residues 78–101 (YECK…DMQH) and 110–133 (YVCA…SKFH). Positions 167–180 (TSGPGTGDSDSGIS) are enriched in low complexity. Residues 167-203 (TSGPGTGDSDSGISVSKTPIMKPGKPKADAKKVPKKP) form a disordered region. Basic and acidic residues predominate over residues 192-203 (PKADAKKVPKKP). The interval 195 to 358 (DAKKVPKKPE…PAQLAPTKVT (164 aa)) is required for homodimerization. 4 consecutive DNA-binding regions (homeobox) follow at residues 263–324 (NTTK…WSPE), 439–501 (TPAS…IVHI), 530–591 (PQKF…EQAV), and 628–690 (SPSP…TVKW). The required for repressor activity stretch occupies residues 263 to 446 (NTTKYNSALD…PLTPASDRKK (184 aa)). Residues 263–497 (NTTKYNSALD…SDHRYRCQRG (235 aa)) form a required for interaction with NFYA region. The interval 317–446 (HGISWSPEEV…PLTPASDRKK (130 aa)) is required for nuclear localization. The disordered stretch occupies residues 404-445 (GQKRPLVTPQAAPEPKRPHIAQVPEPPPKVANPPLTPASDRK). A compositionally biased stretch (pro residues) spans 427 to 439 (PEPPPKVANPPLT). Lys455 is covalently cross-linked (Glycyl lysine isopeptide (Lys-Gly) (interchain with G-Cter in SUMO2)). Positions 754-837 (EPAKDCLPAK…DCVPAEAGQA (84 aa)) are disordered. 2 positions are modified to phosphoserine: Ser825 and Ser827.

Belongs to the ZHX family. As to quaternary structure, homodimer (via homeobox domain 1). Heterodimer with ZHX1 (via homeobox domain 1). Heterodimer with ZHX3 (via homeobox domain 1). Heterodimerization with ZHX1 is not necessary for repressor activity. Interacts (via homeobox domain) with NFYA (via N-terminus). Interacts with EFNB1 intracellular domain peptide; the interaction enhances ZHX2 transcriptional repression activity.

The protein resides in the nucleus. In terms of biological role, acts as a transcriptional repressor. Represses the promoter activity of the CDC25C gene stimulated by NFYA. May play a role in retinal development where it regulates the composition of bipolar cell populations, by promoting differentiation of bipolar OFF-type cells. In the brain, may promote maintenance and suppress differentiation of neural progenitor cells in the developing cortex. In Pongo abelii (Sumatran orangutan), this protein is Zinc fingers and homeoboxes protein 2 (ZHX2).